Consider the following 72-residue polypeptide: Translation initiation factor IF-1 (72 aa).

The S1-like domain occupies 1 to 72 (MAKEDAIELQ…SKGRIVFRAR (72 aa)).

This sequence belongs to the IF-1 family. In terms of assembly, component of the 30S ribosomal translation pre-initiation complex which assembles on the 30S ribosome in the order IF-2 and IF-3, IF-1 and N-formylmethionyl-tRNA(fMet); mRNA recruitment can occur at any time during PIC assembly.

The protein localises to the cytoplasm. Its function is as follows. One of the essential components for the initiation of protein synthesis. Stabilizes the binding of IF-2 and IF-3 on the 30S subunit to which N-formylmethionyl-tRNA(fMet) subsequently binds. Helps modulate mRNA selection, yielding the 30S pre-initiation complex (PIC). Upon addition of the 50S ribosomal subunit IF-1, IF-2 and IF-3 are released leaving the mature 70S translation initiation complex. The sequence is that of Translation initiation factor IF-1 from Aliivibrio fischeri (strain ATCC 700601 / ES114) (Vibrio fischeri).